Consider the following 231-residue polypeptide: 7-cyano-7-deazaguanine synthase (231 aa).

An ATP-binding site is contributed by Phe8 to Leu18. Positions 188, 197, 200, and 203 each coordinate Zn(2+).

This sequence belongs to the QueC family. It depends on Zn(2+) as a cofactor.

It carries out the reaction 7-carboxy-7-deazaguanine + NH4(+) + ATP = 7-cyano-7-deazaguanine + ADP + phosphate + H2O + H(+). It participates in purine metabolism; 7-cyano-7-deazaguanine biosynthesis. Catalyzes the ATP-dependent conversion of 7-carboxy-7-deazaguanine (CDG) to 7-cyano-7-deazaguanine (preQ(0)). This Escherichia coli O157:H7 protein is 7-cyano-7-deazaguanine synthase.